The chain runs to 436 residues: GTPase Der (436 aa).

2 consecutive EngA-type G domains span residues 4-167 (PTVA…PVEE) and 175-351 (IRFS…ESQN). GTP contacts are provided by residues 10–17 (GRPNVGKS), 57–61 (DTGGI), 119–122 (NKVD), 181–188 (GRPNVGKS), 229–233 (DTAGM), and 294–297 (NKWD). The KH-like domain occupies 352–436 (KRIPSAVLND…PIHLIARKRK (85 aa)).

It belongs to the TRAFAC class TrmE-Era-EngA-EngB-Septin-like GTPase superfamily. EngA (Der) GTPase family. As to quaternary structure, associates with the 50S ribosomal subunit.

In terms of biological role, GTPase that plays an essential role in the late steps of ribosome biogenesis. This chain is GTPase Der, found in Streptococcus pyogenes serotype M5 (strain Manfredo).